A 169-amino-acid chain; its full sequence is Acetolactate synthase small subunit (169 aa).

Positions 8–85 (TLSVLVEDTP…KVVEQEADNS (78 aa)) constitute an ACT domain.

It belongs to the acetolactate synthase small subunit family. In terms of assembly, dimer of large and small chains.

The enzyme catalyses 2 pyruvate + H(+) = (2S)-2-acetolactate + CO2. Its pathway is amino-acid biosynthesis; L-isoleucine biosynthesis; L-isoleucine from 2-oxobutanoate: step 1/4. The protein operates within amino-acid biosynthesis; L-valine biosynthesis; L-valine from pyruvate: step 1/4. This is Acetolactate synthase small subunit (ilvH) from Mycobacterium leprae (strain TN).